Here is an 855-residue protein sequence, read N- to C-terminus: Pre-mRNA-splicing factor SYF1 (855 aa).

HAT repeat units follow at residues 15–47, 48–80, 90–122, 124–158, 160–192, 198–230, 235–268, 270–305, and 369–407; these read LVFE…FKQG, APKP…ARRA, PAYE…FLMD, GRVT…FLRS, PLPE…SSDR, QRLA…LISQ, VQSL…YYIR, GHFE…FEES, and GRPR…FYED. The residue at position 420 (lysine 420) is an N6-acetyllysine. HAT repeat units lie at residues 498–530, 532–566, 571–605, 643–677, and 679–713; these read GTFQ…FLEE, KYFE…KFIA, RKLE…LEEE, YGVT…MECK, and GEID…FEVR. A disordered region spans residues 810-855; sequence LAQQVNPEEIQLGEDEDEDEMDLEPNEVRLEQQSVPAAVFGSLKED. A compositionally biased stretch (acidic residues) spans 820-834; sequence QLGEDEDEDEMDLEP. Residue serine 851 is modified to Phosphoserine.

Belongs to the crooked-neck family. Associates with RNA polymerase II, the TCR-specific proteins CKN1/CSA and ERCC6/CSB, and XPA. Identified in the spliceosome C complex. Component of the XAB2 complex, a multimeric protein complex composed of XAB2, PRPF19, AQR, ZNF830, ISY1, and PPIE. Identified in a pentameric intron-binding (IB) complex composed of AQR, XAB2, ISY1, ZNF830 and PPIE that is incorporated into the spliceosome as a preassembled complex. The IB complex does not contain PRPF19.

It is found in the nucleus. Its function is as follows. Involved in pre-mRNA splicing as component of the spliceosome. Involved in transcription-coupled repair (TCR), transcription and pre-mRNA splicing. In Homo sapiens (Human), this protein is Pre-mRNA-splicing factor SYF1 (XAB2).